A 334-amino-acid polypeptide reads, in one-letter code: Trans-O-hydroxybenzylidenepyruvate hydratase-aldolase (334 aa).

It belongs to the DapA family.

The enzyme catalyses (3E)-4-(2-hydroxyphenyl)-2-oxobut-3-enoate + H2O = salicylaldehyde + pyruvate. It functions in the pathway aromatic compound metabolism; naphthalene degradation. In terms of biological role, involved in the naphthalene upper catabolic pathway. Catalyzes the transformation of trans-O-hydroxybenzylidenepyruvate (THBPA) to salicylaldehyde and pyruvate. The reaction is reversible. The polypeptide is Trans-O-hydroxybenzylidenepyruvate hydratase-aldolase (pahE) (Pseudomonas aeruginosa).